A 393-amino-acid chain; its full sequence is Probable xylan O-acetyltransferase 11 (393 aa).

Topologically, residues 1-9 are cytoplasmic; the sequence is MHQPAIMQR. Residues 10–26 form a helical; Signal-anchor for type II membrane protein membrane-spanning segment; that stretch reads ALAVVALLAAAAAIAAA. Residues 27–393 lie on the Lumenal side of the membrane; the sequence is QGESPELLPF…LFFPARDEAI (367 aa). Intrachain disulfides connect cysteine 45–cysteine 96, cysteine 67–cysteine 132, cysteine 76–cysteine 368, and cysteine 283–cysteine 364. N-linked (GlcNAc...) asparagine glycosylation is present at asparagine 102. The GDS motif signature appears at 119–121; that stretch reads GDS. Catalysis depends on serine 121, which acts as the Nucleophile. Asparagine 325 carries an N-linked (GlcNAc...) asparagine glycan. Catalysis depends on aspartate 363, which acts as the Proton donor. The DXXH motif signature appears at 363–366; that stretch reads DCTH. Residue histidine 366 is the Proton acceptor of the active site.

This sequence belongs to the PC-esterase family. TBL subfamily. As to expression, expressed in roots, leaves and stems.

It localises to the golgi apparatus membrane. In terms of biological role, probable xylan acetyltransferase required for 2-O- and 3-O-monoacetylation of xylosyl residues in xylan. Possesses extremely low activity in vitro. The protein is Probable xylan O-acetyltransferase 11 of Oryza sativa subsp. japonica (Rice).